Here is a 151-residue protein sequence, read N- to C-terminus: Ribosome maturation factor RimP (151 aa).

It belongs to the RimP family.

It is found in the cytoplasm. Functionally, required for maturation of 30S ribosomal subunits. This Nitrosococcus oceani (strain ATCC 19707 / BCRC 17464 / JCM 30415 / NCIMB 11848 / C-107) protein is Ribosome maturation factor RimP.